The chain runs to 120 residues: NAD(P)H-quinone oxidoreductase subunit 3 (120 aa).

Helical transmembrane passes span 2 to 22 (FVLS…LVPI), 64 to 84 (MFAL…PWAV), and 89 to 109 (LGLL…IALV).

Belongs to the complex I subunit 3 family. NDH-1 can be composed of about 15 different subunits; different subcomplexes with different compositions have been identified which probably have different functions.

It localises to the cellular thylakoid membrane. The catalysed reaction is a plastoquinone + NADH + (n+1) H(+)(in) = a plastoquinol + NAD(+) + n H(+)(out). The enzyme catalyses a plastoquinone + NADPH + (n+1) H(+)(in) = a plastoquinol + NADP(+) + n H(+)(out). Functionally, NDH-1 shuttles electrons from an unknown electron donor, via FMN and iron-sulfur (Fe-S) centers, to quinones in the respiratory and/or the photosynthetic chain. The immediate electron acceptor for the enzyme in this species is believed to be plastoquinone. Couples the redox reaction to proton translocation, and thus conserves the redox energy in a proton gradient. Cyanobacterial NDH-1 also plays a role in inorganic carbon-concentration. The protein is NAD(P)H-quinone oxidoreductase subunit 3 of Picosynechococcus sp. (strain ATCC 27264 / PCC 7002 / PR-6) (Agmenellum quadruplicatum).